The primary structure comprises 508 residues: DDB1- and CUL4-associated factor 10 (508 aa).

A disordered region spans residues Met-1–Gly-75. A compositionally biased stretch (basic and acidic residues) spans Ser-7–Leu-17. The span at Arg-18 to Glu-32 shows a compositional bias: acidic residues. Over residues Gly-63–Gly-75 the composition is skewed to gly residues. 4 WD repeats span residues Gln-126–Thr-165, Ala-169–Cys-207, Gly-211–Cys-250, and Phe-256–Glu-295. The interval Pro-307–Ser-343 is disordered. The segment covering His-325–Leu-338 has biased composition (basic and acidic residues). WD repeat units lie at residues Asp-356–Ala-396, Val-419–Val-457, and Ser-475–Phe-508.

Belongs to the WD repeat DCAF10 family.

The protein operates within protein modification; protein ubiquitination. May function as a substrate receptor for CUL4-DDB1 E3 ubiquitin-protein ligase complex. The protein is DDB1- and CUL4-associated factor 10 (dcaf10) of Danio rerio (Zebrafish).